A 379-amino-acid chain; its full sequence is F-box/kelch-repeat protein At4g33900 (379 aa).

The 47-residue stretch at 9-55 folds into the F-box domain; that stretch reads IKRFLMLPDDLVFNCLARVSRLHYPTLSLVSKKFRFLLASKELYQTR. 3 Kelch repeats span residues 116–175, 176–222, and 262–308; these read EIYA…TLDG, RIYV…LSIS, and SCCV…RNFK.

The protein is F-box/kelch-repeat protein At4g33900 of Arabidopsis thaliana (Mouse-ear cress).